A 105-amino-acid polypeptide reads, in one-letter code: Large ribosomal subunit protein uL23 (105 aa).

It belongs to the universal ribosomal protein uL23 family. As to quaternary structure, part of the 50S ribosomal subunit. Contacts protein L29, and trigger factor when it is bound to the ribosome.

Its function is as follows. One of the early assembly proteins it binds 23S rRNA. One of the proteins that surrounds the polypeptide exit tunnel on the outside of the ribosome. Forms the main docking site for trigger factor binding to the ribosome. The polypeptide is Large ribosomal subunit protein uL23 (Janthinobacterium sp. (strain Marseille) (Minibacterium massiliensis)).